The chain runs to 262 residues: Type II restriction enzyme HinfI (262 aa).

It carries out the reaction Endonucleolytic cleavage of DNA to give specific double-stranded fragments with terminal 5'-phosphates.. Functionally, a P subtype restriction enzyme that recognizes the double-stranded sequence 5'-GANTC-3' and cleaves after G-1. The polypeptide is Type II restriction enzyme HinfI (hinfIR) (Haemophilus influenzae).